The sequence spans 475 residues: Ribulose bisphosphate carboxylase large chain (475 aa).

Positions methionine 1 to serine 2 are excised as a propeptide. At proline 3 the chain carries N-acetylproline. Lysine 14 carries the N6,N6,N6-trimethyllysine modification. Substrate-binding residues include asparagine 123 and threonine 173. Lysine 175 (proton acceptor) is an active-site residue. Lysine 177 serves as a coordination point for substrate. Residues lysine 201, aspartate 203, and glutamate 204 each contribute to the Mg(2+) site. An N6-carboxylysine modification is found at lysine 201. Histidine 294 acts as the Proton acceptor in catalysis. Positions 295, 327, and 379 each coordinate substrate.

This sequence belongs to the RuBisCO large chain family. Type I subfamily. In terms of assembly, heterohexadecamer of 8 large chains and 8 small chains; disulfide-linked. The disulfide link is formed within the large subunit homodimers. It depends on Mg(2+) as a cofactor. The disulfide bond which can form in the large chain dimeric partners within the hexadecamer appears to be associated with oxidative stress and protein turnover.

The protein localises to the plastid. The protein resides in the chloroplast. The enzyme catalyses 2 (2R)-3-phosphoglycerate + 2 H(+) = D-ribulose 1,5-bisphosphate + CO2 + H2O. It carries out the reaction D-ribulose 1,5-bisphosphate + O2 = 2-phosphoglycolate + (2R)-3-phosphoglycerate + 2 H(+). Functionally, ruBisCO catalyzes two reactions: the carboxylation of D-ribulose 1,5-bisphosphate, the primary event in carbon dioxide fixation, as well as the oxidative fragmentation of the pentose substrate in the photorespiration process. Both reactions occur simultaneously and in competition at the same active site. The chain is Ribulose bisphosphate carboxylase large chain from Notothixos subaureus (Golden mistletoe).